We begin with the raw amino-acid sequence, 329 residues long: Ankyrin repeat and SOCS box protein 5 (329 aa).

6 ANK repeats span residues 69–98, 102–131, 135–164, 167–196, 200–229, and 232–261; these read ADRSPLHEAASQGRLLALRTLLSQGYNVNA, DHVTPLHEACLGDHVACARTLLEAGANANA, DGVTPLFNACSQGSASCAELLLEYGAKAQL, CFPSPTHEAASKGHHECLDILIAWGIDVDQ, HLGTPLYVACMSQQFHCIWKLLYAGADVHK, and YWDTPLHAAAQQPSTEIVNLLLEFGADINA. Positions 278–329 constitute an SOCS box domain; it reads AVERILLQHEATPSSLCQLCRLCIRNYIGRQRFHLIPQLQLPTLLQNFLQYR.

Belongs to the ankyrin SOCS box (ASB) family.

The protein operates within protein modification; protein ubiquitination. Functionally, may be a substrate-recognition component of a SCF-like ECS (Elongin-Cullin-SOCS-box protein) E3 ubiquitin-protein ligase complex which mediates the ubiquitination and subsequent proteasomal degradation of target proteins. May play a role in the initiation of arteriogenesis. The protein is Ankyrin repeat and SOCS box protein 5 (Asb5) of Mus musculus (Mouse).